The sequence spans 302 residues: Beta-lactamase (302 aa).

Positions 1–11 (MADRRRVHAWA) are enriched in basic residues. The N-terminal stretch at 1–29 (MADRRRVHAWARARPAAPEPAPPTPSAAA) is a signal peptide. The interval 1 to 43 (MADRRRVHAWARARPAAPEPAPPTPSAAAPSVAPGPAATPPDP) is disordered. A compositionally biased stretch (low complexity) spans 26–36 (SAAAPSVAPGP). The active-site Acyl-ester intermediate is the S85. Position 143 (S143) interacts with substrate. Catalysis depends on E179, which acts as the Proton acceptor. 247-249 (KTG) contributes to the substrate binding site.

This sequence belongs to the class-A beta-lactamase family.

The protein resides in the secreted. It carries out the reaction a beta-lactam + H2O = a substituted beta-amino acid. Its function is as follows. Active on penicillins but not on cephalosporins. The polypeptide is Beta-lactamase (bla) (Amycolatopsis lactamdurans (Nocardia lactamdurans)).